A 419-amino-acid polypeptide reads, in one-letter code: UDP-N-acetylglucosamine 1-carboxyvinyltransferase (419 aa).

22–23 is a phosphoenolpyruvate binding site; sequence KN. R93 contacts UDP-N-acetyl-alpha-D-glucosamine. Residue C117 is the Proton donor of the active site. The residue at position 117 (C117) is a 2-(S-cysteinyl)pyruvic acid O-phosphothioketal. Residues D307 and I329 each contribute to the UDP-N-acetyl-alpha-D-glucosamine site.

The protein belongs to the EPSP synthase family. MurA subfamily.

Its subcellular location is the cytoplasm. It carries out the reaction phosphoenolpyruvate + UDP-N-acetyl-alpha-D-glucosamine = UDP-N-acetyl-3-O-(1-carboxyvinyl)-alpha-D-glucosamine + phosphate. It functions in the pathway cell wall biogenesis; peptidoglycan biosynthesis. Cell wall formation. Adds enolpyruvyl to UDP-N-acetylglucosamine. The chain is UDP-N-acetylglucosamine 1-carboxyvinyltransferase from Shewanella piezotolerans (strain WP3 / JCM 13877).